A 100-amino-acid polypeptide reads, in one-letter code: MKYRIFKMKYTLLFLSVIALVHIFAVEAKDEPESDALVPQERGCLDIGKTCKDDCECCGCGNVCYCPFDWFGGKWQPFGCSCAYGLKYVCAHKQKKCPNV.

An N-terminal signal peptide occupies residues 1–28 (MKYRIFKMKYTLLFLSVIALVHIFAVEA). Residues 29-41 (KDEPESDALVPQE) constitute a propeptide that is removed on maturation. Intrachain disulfides connect cysteine 44-cysteine 58, cysteine 51-cysteine 64, cysteine 57-cysteine 82, cysteine 66-cysteine 80, and cysteine 90-cysteine 97.

This sequence belongs to the neurotoxin 09 (Tx3-6) family. As to expression, expressed by the venom gland.

The protein resides in the secreted. Probable neurotoxin. This Phoneutria nigriventer (Brazilian armed spider) protein is U12-ctenitoxin-Pn1a.